The following is a 102-amino-acid chain: uncharacterized protein (102 aa).

The protein belongs to the helicase family. Yeast subtelomeric Y' repeat subfamily.

This is an uncharacterized protein from Saccharomyces cerevisiae (strain ATCC 204508 / S288c) (Baker's yeast).